The sequence spans 92 residues: Small ribosomal subunit protein uS19c (92 aa).

Belongs to the universal ribosomal protein uS19 family.

The protein resides in the plastid. It localises to the chloroplast. Protein S19 forms a complex with S13 that binds strongly to the 16S ribosomal RNA. This chain is Small ribosomal subunit protein uS19c, found in Amborella trichopoda.